The sequence spans 621 residues: tRNA uridine 5-carboxymethylaminomethyl modification enzyme MnmG (621 aa).

11–16 (GGGHAG) lines the FAD pocket. 270 to 284 (GPRYCPSIEDKINRF) serves as a coordination point for NAD(+).

Belongs to the MnmG family. In terms of assembly, homodimer. Heterotetramer of two MnmE and two MnmG subunits. Requires FAD as cofactor.

It localises to the cytoplasm. In terms of biological role, NAD-binding protein involved in the addition of a carboxymethylaminomethyl (cmnm) group at the wobble position (U34) of certain tRNAs, forming tRNA-cmnm(5)s(2)U34. This Helicobacter pylori (strain Shi470) protein is tRNA uridine 5-carboxymethylaminomethyl modification enzyme MnmG.